The following is a 74-amino-acid chain: DNA-directed RNA polymerase subunit omega (74 aa).

Belongs to the RNA polymerase subunit omega family. In terms of assembly, the RNAP catalytic core consists of 2 alpha, 1 beta, 1 beta' and 1 omega subunit. When a sigma factor is associated with the core the holoenzyme is formed, which can initiate transcription.

The enzyme catalyses RNA(n) + a ribonucleoside 5'-triphosphate = RNA(n+1) + diphosphate. Functionally, promotes RNA polymerase assembly. Latches the N- and C-terminal regions of the beta' subunit thereby facilitating its interaction with the beta and alpha subunits. The protein is DNA-directed RNA polymerase subunit omega of Marinomonas sp. (strain MWYL1).